Consider the following 886-residue polypeptide: MWTPRVPPPRPALSFFLLLLLGVTYGLFPEEPPPLSVAPRDYLSHYPVFVGSGPGRLTAAEGAEDLNIQRVLRVNRTLFIGDRDNLYQVELEPSTSTELRYQRKLTWRSNPSDIDVCRMKGKQEGECRNFVKVLLLRDESTLFVCGSNAFNPICANYSMDTLQLLGDSISGMARCPYDPKHANVALFSDGMLFTATVTDFLAIDAVIYRSLGDRPTLRTVKHDSKWFKEPYFVHAVEWGSHVYFFFREIAMEFNYLEKVVVSRVARVCKNDVGGSPRVLEKQWTSFLKARLNCSVPGDSHFYFNVLQAVTGVVSLGGRPVILAVFSTPSNSIPGSAVCAFDMNQVAAVFEGRFREQKSPESIWTPVPEDQVPRPRPGCCAAPGMQYNASSALPDEILNFVKTHPLMDEAVPSLGHSPWIVRTLMRHQLTRVAVDVGAGPWGNQTIVFLGSEAGTVLKFLVKPNASVSGTTGPSIFLEEFETYRPDRCGRPSSAGEWGQRLLSLELDAASGGLLAAFPRCVVRVPVARCQLYSGCMKNCIGSQDPYCGWAPDGSCIFLRPGTSATFEQDVSGASTSGLGDCTGLLRASLSDDRAGLVSVNLLVTSSVAAFVVGAVVSGFSVGWFVGLRERRELARRKDKEAILAHGGSEAVLSVSRLGERRGTGPGGRGGAGGGPGGPPEALLAPLMQNGWTKAALLHGGPHDLDTGLLPTPEQTPLPQKRLPTPHPHAHALGSRAWDHSHALLSASASTSLLLLAPARASEQPQVPAEPGPESRLCAPRSCRASHPGDFPLTPHASPDRRRVVSAPTGPLDPSVGDGLPGPWSPPATSSLRRPGPHGPPTAALRRTHTFNSGEARPGGHRPRRHPPADSTHLLPCGTGERTAPPVP.

Positions 1-26 are cleaved as a signal peptide; it reads MWTPRVPPPRPALSFFLLLLLGVTYG. Residues 27–605 are Extracellular-facing; sequence LFPEEPPPLS…VSVNLLVTSS (579 aa). In terms of domain architecture, Sema spans 32–525; that stretch reads PPPLSVAPRD…FPRCVVRVPV (494 aa). A glycan (N-linked (GlcNAc...) asparagine) is linked at asparagine 75. 2 disulfides stabilise this stretch: cysteine 117–cysteine 127 and cysteine 145–cysteine 154. Asparagine 156 and asparagine 292 each carry an N-linked (GlcNAc...) asparagine glycan. 2 disulfide bridges follow: cysteine 268–cysteine 379 and cysteine 293–cysteine 338. Residues asparagine 387, asparagine 442, and asparagine 463 are each glycosylated (N-linked (GlcNAc...) asparagine). Cystine bridges form between cysteine 487–cysteine 519, cysteine 528–cysteine 546, cysteine 534–cysteine 580, and cysteine 538–cysteine 554. The chain crosses the membrane as a helical span at residues 606-626; that stretch reads VAAFVVGAVVSGFSVGWFVGL. Over 627-886 the chain is Cytoplasmic; it reads RERRELARRK…TGERTAPPVP (260 aa). Disordered stretches follow at residues 655 to 677, 697 to 731, and 761 to 886; these read RLGERRGTGPGGRGGAGGGPGGP, HGGPHDLDTGLLPTPEQTPLPQKRLPTPHPHAHAL, and EQPQ…PPVP. The span at 662–674 shows a compositional bias: gly residues; it reads TGPGGRGGAGGGP. The residue at position 667 (arginine 667) is an Omega-N-methylarginine. Low complexity predominate over residues 707–718; that stretch reads LLPTPEQTPLPQ.

The protein belongs to the semaphorin family. Homodimer. Binds specifically the SH3 domain of the protooncogene C-SRC. In adulthood, it is expressed ubiquitously.

It localises to the cell membrane. Its function is as follows. Functions as a cell surface repellent for mossy fibers of developing neurons in the hippocampus where it plays a role in axon guidance. May function through the PLXNA4 receptor expressed by mossy cell axons. The protein is Semaphorin-6B (Sema6b) of Mus musculus (Mouse).